Consider the following 887-residue polypeptide: DNA gyrase subunit A (887 aa).

The Topo IIA-type catalytic domain maps to Leu35–Leu501. Tyr123 acts as the O-(5'-phospho-DNA)-tyrosine intermediate in catalysis. The GyrA-box motif lies at Gln528–Gly534. Residues Lys811–Gly864 form a disordered region. A compositionally biased stretch (acidic residues) spans Asp813–Gln823.

Belongs to the type II topoisomerase GyrA/ParC subunit family. As to quaternary structure, heterotetramer, composed of two GyrA and two GyrB chains. In the heterotetramer, GyrA contains the active site tyrosine that forms a transient covalent intermediate with DNA, while GyrB binds cofactors and catalyzes ATP hydrolysis.

It is found in the cytoplasm. The catalysed reaction is ATP-dependent breakage, passage and rejoining of double-stranded DNA.. A type II topoisomerase that negatively supercoils closed circular double-stranded (ds) DNA in an ATP-dependent manner to modulate DNA topology and maintain chromosomes in an underwound state. Negative supercoiling favors strand separation, and DNA replication, transcription, recombination and repair, all of which involve strand separation. Also able to catalyze the interconversion of other topological isomers of dsDNA rings, including catenanes and knotted rings. Type II topoisomerases break and join 2 DNA strands simultaneously in an ATP-dependent manner. This chain is DNA gyrase subunit A, found in Staphylococcus aureus (strain COL).